A 316-amino-acid polypeptide reads, in one-letter code: Transaldolase (316 aa).

K132 functions as the Schiff-base intermediate with substrate in the catalytic mechanism.

This sequence belongs to the transaldolase family. Type 1 subfamily. Homodimer.

The protein localises to the cytoplasm. The enzyme catalyses D-sedoheptulose 7-phosphate + D-glyceraldehyde 3-phosphate = D-erythrose 4-phosphate + beta-D-fructose 6-phosphate. It participates in carbohydrate degradation; pentose phosphate pathway; D-glyceraldehyde 3-phosphate and beta-D-fructose 6-phosphate from D-ribose 5-phosphate and D-xylulose 5-phosphate (non-oxidative stage): step 2/3. Functionally, transaldolase is important for the balance of metabolites in the pentose-phosphate pathway. This is Transaldolase from Marinomonas sp. (strain MWYL1).